We begin with the raw amino-acid sequence, 226 residues long: Low-molecular weight cobalt-containing nitrile hydratase subunit beta (226 aa).

The segment at 1–22 (MDGIHDLGGRAGLGPIKPESDE) is disordered.

It belongs to the nitrile hydratase subunit beta family. As to quaternary structure, heterodimer of an alpha and a beta chain.

The catalysed reaction is an aliphatic primary amide = an aliphatic nitrile + H2O. In terms of biological role, NHase catalyzes the hydration of various nitrile compounds to the corresponding amides. This is Low-molecular weight cobalt-containing nitrile hydratase subunit beta from Rhodococcus rhodochrous.